The chain runs to 312 residues: Coproporphyrin III ferrochelatase (312 aa).

Residues Tyr13, Arg30, 46–47, Ser54, and Tyr125 each bind Fe-coproporphyrin III; that span reads RY. Positions 183 and 264 each coordinate Fe(2+).

The protein belongs to the ferrochelatase family.

Its subcellular location is the cytoplasm. It carries out the reaction Fe-coproporphyrin III + 2 H(+) = coproporphyrin III + Fe(2+). The protein operates within porphyrin-containing compound metabolism; protoheme biosynthesis. Functionally, involved in coproporphyrin-dependent heme b biosynthesis. Catalyzes the insertion of ferrous iron into coproporphyrin III to form Fe-coproporphyrin III. This Bacillus pumilus (strain SAFR-032) protein is Coproporphyrin III ferrochelatase.